Consider the following 105-residue polypeptide: Urease subunit beta (105 aa).

This sequence belongs to the urease beta subunit family. As to quaternary structure, heterotrimer of UreA (gamma), UreB (beta) and UreC (alpha) subunits. Three heterotrimers associate to form the active enzyme.

The protein resides in the cytoplasm. The catalysed reaction is urea + 2 H2O + H(+) = hydrogencarbonate + 2 NH4(+). Its pathway is nitrogen metabolism; urea degradation; CO(2) and NH(3) from urea (urease route): step 1/1. The sequence is that of Urease subunit beta from Pseudomonas putida (strain GB-1).